The chain runs to 150 residues: Putative biopolymer transport protein ExbB-like 2 (150 aa).

3 helical membrane-spanning segments follow: residues 5–25 (VDYG…AIAI), 63–83 (APYI…MDLG), and 97–117 (LALA…AIVI).

It belongs to the ExbB/TolQ family.

The protein resides in the cell inner membrane. This chain is Putative biopolymer transport protein ExbB-like 2, found in Helicobacter pylori (strain ATCC 700392 / 26695) (Campylobacter pylori).